A 1150-amino-acid chain; its full sequence is Fl(2)d-associated complex component (1150 aa).

Residues 1-10 are compositionally biased toward basic and acidic residues; the sequence is MEKKAKESLR. Disordered stretches follow at residues 1–444, 477–710, 833–914, and 1034–1053; these read MEKK…EEER, QGRE…PPPL, ASED…MDTN, and KEQG…AKIP. Over residues 11-20 the composition is skewed to basic residues; that stretch reads RYKKAARHSA. Residues 21-44 show a composition bias toward low complexity; it reads THSSSSDSTSDSDSGSSSYSSTDS. Residues 47–69 show a composition bias toward gly residues; that stretch reads GVGGVGVGVGVPGGAGGPGGSGS. The span at 72–97 shows a compositional bias: basic residues; sequence GHPHTHGHGHHPRSAERHHRKKKSSR. The segment covering 98–107 has biased composition (low complexity); that stretch reads RGGSSSGDEP. Basic residues-rich tracts occupy residues 110-144 and 162-175; these read SRRK…KKRA and AKLK…RLRA. Positions 122-147 form a coiled coil; the sequence is KKLVAKRNHIKRKLKEARLKKRAAAA. The segment covering 176–199 has biased composition (basic and acidic residues); that stretch reads ASKEQRERDKLRVVQRDRERDHHR. Over residues 202–215 the composition is skewed to low complexity; sequence SSRSPPSSSTTTTT. Residues 269 to 347 adopt a coiled-coil conformation; it reads PSLERERERE…KLRRQEEEEG (79 aa). Basic and acidic residues-rich tracts occupy residues 270-414, 428-444, and 492-529; these read SLER…DEMR, YAPR…EEER, and PDER…PEWE. Residues 537–558 show a composition bias toward gly residues; sequence AGGGPGGPSGTPGRPGGFVGGP. Composition is skewed to basic and acidic residues over residues 589-611 and 630-640; these read ERER…DRPD and WLEHDQREKPR. A compositionally biased stretch (pro residues) spans 660–669; that stretch reads PPAPSHPHPA. The segment covering 693–702 has biased composition (basic and acidic residues); sequence GHGDHGERPG. Positions 851 to 861 are enriched in low complexity; sequence QSLNLNQSLSS. Acidic residues predominate over residues 879–889; that stretch reads ELSEISDSDDD. Residues 890–903 show a composition bias toward basic and acidic residues; that stretch reads ILNKTDKVRPKNEL. Residues 905 to 914 show a composition bias toward acidic residues; that stretch reads TETEQEMDTN.

It belongs to the ZC3H13 family. In terms of assembly, component of the WMM complex, a N6-methyltransferase complex composed of a catalytic subcomplex, named MAC, and of an associated subcomplex, named MACOM. The MAC subcomplex is composed of Ime4/Mettl3 and Mettl14. The MACOM subcomplex is composed of fl(2)d, Flacc/Xio, Hakai, vir, and, in some cases of nito. In terms of tissue distribution, widely expressed during embryogenesis but shows enrichment in the neuroectoderm.

It is found in the nucleus. Associated component of the WMM complex, a complex that mediates N6-methyladenosine (m6A) methylation of mRNAs, a modification that plays a role in the efficiency of mRNA splicing and is required for sex determination. In the WMM complex, acts as a key regulator of m6A methylation by bridging fl(2)d to the RNA-binding component nito. Required for sex determination and dosage compensation via Sxl alternative splicing: m6A methylation acts as a key regulator of Sxl pre-mRNA and promotes female-specific alternative splicing of Sxl, which determines female physiognomy. The sequence is that of Fl(2)d-associated complex component from Drosophila melanogaster (Fruit fly).